A 274-amino-acid polypeptide reads, in one-letter code: Thiamine kinase (274 aa).

The protein belongs to the thiamine kinase family.

The catalysed reaction is thiamine + ATP = thiamine phosphate + ADP + H(+). Its pathway is cofactor biosynthesis; thiamine diphosphate biosynthesis; thiamine phosphate from thiamine: step 1/1. Its function is as follows. Catalyzes the ATP-dependent phosphorylation of thiamine to thiamine phosphate. Is involved in thiamine salvage. This is Thiamine kinase from Salmonella gallinarum (strain 287/91 / NCTC 13346).